We begin with the raw amino-acid sequence, 321 residues long: Diguanylate cyclase (321 aa).

One can recognise a PAS domain in the interval 28-98 (QFSLHELVLN…AADQQVFETR (71 aa)). The region spanning 102–155 (VHEERAIAKSNGLVRIYRAVKHPILHRVTGEVIGLIGVSTDITDIVELREQLYQ) is the PAC domain. One can recognise a GGDEF domain in the interval 187–318 (QPLSCISIDI…GRNRCCIYRQ (132 aa)). Residues D195, I196, and E238 each coordinate Mg(2+). The active-site Proton acceptor is E238.

Mg(2+) is required as a cofactor.

It carries out the reaction 2 GTP = 3',3'-c-di-GMP + 2 diphosphate. Involved in biofilm formation. Catalyzes the conversion of GTP to c-di-GMP. The sequence is that of Diguanylate cyclase from Vibrio cholerae serotype O1 (strain ATCC 39541 / Classical Ogawa 395 / O395).